An 89-amino-acid chain; its full sequence is Small ribosomal subunit protein uS15 (89 aa).

It belongs to the universal ribosomal protein uS15 family. As to quaternary structure, part of the 30S ribosomal subunit. Forms a bridge to the 50S subunit in the 70S ribosome, contacting the 23S rRNA.

In terms of biological role, one of the primary rRNA binding proteins, it binds directly to 16S rRNA where it helps nucleate assembly of the platform of the 30S subunit by binding and bridging several RNA helices of the 16S rRNA. Functionally, forms an intersubunit bridge (bridge B4) with the 23S rRNA of the 50S subunit in the ribosome. This Herminiimonas arsenicoxydans protein is Small ribosomal subunit protein uS15.